Reading from the N-terminus, the 351-residue chain is Nicotinate-nucleotide--dimethylbenzimidazole phosphoribosyltransferase (351 aa).

Glutamate 317 acts as the Proton acceptor in catalysis.

This sequence belongs to the CobT family.

It catalyses the reaction 5,6-dimethylbenzimidazole + nicotinate beta-D-ribonucleotide = alpha-ribazole 5'-phosphate + nicotinate + H(+). Its pathway is nucleoside biosynthesis; alpha-ribazole biosynthesis; alpha-ribazole from 5,6-dimethylbenzimidazole: step 1/2. Catalyzes the synthesis of alpha-ribazole-5'-phosphate from nicotinate mononucleotide (NAMN) and 5,6-dimethylbenzimidazole (DMB). This is Nicotinate-nucleotide--dimethylbenzimidazole phosphoribosyltransferase from Bradyrhizobium sp. (strain ORS 278).